The following is a 217-amino-acid chain: Large ribosomal subunit protein uL3 (217 aa).

Residues 134–146 (GRATHGNSRSHNV) show a composition bias toward polar residues. Positions 134–154 (GRATHGNSRSHNVPGSIGMAQ) are disordered. Residue Gln-154 is modified to N5-methylglutamine.

The protein belongs to the universal ribosomal protein uL3 family. Part of the 50S ribosomal subunit. Forms a cluster with proteins L14 and L19. Post-translationally, methylated by PrmB.

Functionally, one of the primary rRNA binding proteins, it binds directly near the 3'-end of the 23S rRNA, where it nucleates assembly of the 50S subunit. The sequence is that of Large ribosomal subunit protein uL3 from Burkholderia cenocepacia (strain HI2424).